We begin with the raw amino-acid sequence, 347 residues long: Farnesyl pyrophosphate synthase (347 aa).

Isopentenyl diphosphate-binding residues include Lys50, Arg53, and Gln88. The Mg(2+) site is built by Asp95 and Asp99. A dimethylallyl diphosphate-binding site is contributed by Arg104. Arg105 contacts isopentenyl diphosphate. Residues Lys192, Thr193, Gln232, Lys249, and Lys258 each contribute to the dimethylallyl diphosphate site.

Belongs to the FPP/GGPP synthase family. As to quaternary structure, interacts with spo9. Requires Mg(2+) as cofactor.

Its subcellular location is the cytoplasm. It is found in the nucleus. It carries out the reaction isopentenyl diphosphate + dimethylallyl diphosphate = (2E)-geranyl diphosphate + diphosphate. The catalysed reaction is isopentenyl diphosphate + (2E)-geranyl diphosphate = (2E,6E)-farnesyl diphosphate + diphosphate. It functions in the pathway isoprenoid biosynthesis; farnesyl diphosphate biosynthesis; farnesyl diphosphate from geranyl diphosphate and isopentenyl diphosphate: step 1/1. It participates in isoprenoid biosynthesis; geranyl diphosphate biosynthesis; geranyl diphosphate from dimethylallyl diphosphate and isopentenyl diphosphate: step 1/1. Functionally, farnesyl pyrophosphate synthase; part of the second module of ergosterol biosynthesis pathway that includes the middle steps of the pathway. Fps1 catalyzes the sequential condensation of isopentenyl pyrophosphate with dimethylallyl pyrophosphate, and then with the resultant geranylpyrophosphate to the ultimate product farnesyl pyrophosphate. The second module is carried out in the vacuole and involves the formation of farnesyl diphosphate, which is also an important intermediate in the biosynthesis of ubiquinone, dolichol, heme and prenylated proteins. Activity by the mevalonate kinase erg12 first converts mevalonate into 5-phosphomevalonate. 5-phosphomevalonate is then further converted to 5-diphosphomevalonate by the phosphomevalonate kinase erg8. The diphosphomevalonate decarboxylase mvd1 then produces isopentenyl diphosphate. The isopentenyl-diphosphate delta-isomerase idi1 then catalyzes the 1,3-allylic rearrangement of the homoallylic substrate isopentenyl (IPP) to its highly electrophilic allylic isomer, dimethylallyl diphosphate (DMAPP). Finally the farnesyl diphosphate synthase fps1 catalyzes the sequential condensation of isopentenyl pyrophosphate with dimethylallyl pyrophosphate, and then with the resultant geranylpyrophosphate to the ultimate product farnesyl pyrophosphate. In Schizosaccharomyces pombe (strain 972 / ATCC 24843) (Fission yeast), this protein is Farnesyl pyrophosphate synthase.